The chain runs to 98 residues: NADH-ubiquinone oxidoreductase chain 4L (98 aa).

3 consecutive transmembrane segments (helical) span residues 1 to 21 (MTLI…GLLM), 29 to 49 (ALLC…LTIL), and 61 to 81 (IILL…LVMV).

Belongs to the complex I subunit 4L family. In terms of assembly, core subunit of respiratory chain NADH dehydrogenase (Complex I) which is composed of 45 different subunits.

The protein resides in the mitochondrion inner membrane. The enzyme catalyses a ubiquinone + NADH + 5 H(+)(in) = a ubiquinol + NAD(+) + 4 H(+)(out). Functionally, core subunit of the mitochondrial membrane respiratory chain NADH dehydrogenase (Complex I) which catalyzes electron transfer from NADH through the respiratory chain, using ubiquinone as an electron acceptor. Part of the enzyme membrane arm which is embedded in the lipid bilayer and involved in proton translocation. This Eschrichtius robustus (California gray whale) protein is NADH-ubiquinone oxidoreductase chain 4L (MT-ND4L).